The following is a 464-amino-acid chain: Cysteine--tRNA ligase (464 aa).

Residue Cys-29 coordinates Zn(2+). The 'HIGH' region signature appears at 31 to 41; it reads ATVQGVPHIGH. The disordered stretch occupies residues 160-180; the sequence is RLDEVQQGESTASGKRDPRDF. Zn(2+) is bound by residues Cys-208, His-233, and Glu-237. Residues 264–268 carry the 'KMSKS' region motif; the sequence is KMSKS. Lys-267 is an ATP binding site.

The protein belongs to the class-I aminoacyl-tRNA synthetase family. As to quaternary structure, monomer. The cofactor is Zn(2+).

It localises to the cytoplasm. The enzyme catalyses tRNA(Cys) + L-cysteine + ATP = L-cysteinyl-tRNA(Cys) + AMP + diphosphate. This is Cysteine--tRNA ligase from Saccharopolyspora erythraea (strain ATCC 11635 / DSM 40517 / JCM 4748 / NBRC 13426 / NCIMB 8594 / NRRL 2338).